The chain runs to 236 residues: MGQKTHPIGFRLGAIRGWDSNWYSETNFQDKLVEDEELRRYLHTRLKRAGLSRAVIERTPERVILTLHTSRPGVVIGRGGSEVEKLKGELETLTGKDIQINISEIKRPELDATLVAKNIVQQLEGRISFRRAMKQAMQAAMRMGAEGVRIRAAGRLGGAEMGRTEEYMEGRVPLHTIRADIDFAQETALTIYGTIGVKVWIHRGEILGKPDLSPNVQAQQRKMKESPQQRRQRRGG.

A KH type-2 domain is found at leucine 38–lysine 106. The disordered stretch occupies residues aspartate 211–glycine 236.

This sequence belongs to the universal ribosomal protein uS3 family. As to quaternary structure, part of the 30S ribosomal subunit. Forms a tight complex with proteins S10 and S14.

Functionally, binds the lower part of the 30S subunit head. Binds mRNA in the 70S ribosome, positioning it for translation. In Salinibacter ruber (strain DSM 13855 / M31), this protein is Small ribosomal subunit protein uS3.